We begin with the raw amino-acid sequence, 134 residues long: Small ribosomal subunit protein uS8c (134 aa).

The protein belongs to the universal ribosomal protein uS8 family. As to quaternary structure, part of the 30S ribosomal subunit.

The protein localises to the plastid. Its subcellular location is the chloroplast. One of the primary rRNA binding proteins, it binds directly to 16S rRNA central domain where it helps coordinate assembly of the platform of the 30S subunit. This Lactuca sativa (Garden lettuce) protein is Small ribosomal subunit protein uS8c (rps8).